The chain runs to 631 residues: Transmembrane and coiled-coil domain-containing protein 4 (631 aa).

The disordered stretch occupies residues 1 to 27 (MATWNRPHPRQPVAPEPAAEDDSQQPL). Residues 156–183 (FLESLKDAKEEESETAEASRKRKEKRRK) are a coiled coil. Transmembrane regions (helical) follow at residues 200-220 (VIGV…ATII), 228-248 (LGSV…GAGL), and 343-363 (LSGI…ANVI). The segment at 555 to 595 (DGQSQGPASEDSLKTTIPSSASQAQMPAGLNQSTEDSLSTA) is disordered. Residues 568–594 (KTTIPSSASQAQMPAGLNQSTEDSLST) are compositionally biased toward polar residues.

Belongs to the TMCO4 family.

It localises to the membrane. In Mus musculus (Mouse), this protein is Transmembrane and coiled-coil domain-containing protein 4 (Tmco4).